Consider the following 962-residue polypeptide: Protease 3 (962 aa).

A signal peptide spans 1–23 (MPRSTWFKALLLLVALWGPAVQA). His88 is a binding site for Zn(2+). Residue Glu91 is the Proton acceptor of the active site. Zn(2+) contacts are provided by His92 and Glu169.

It belongs to the peptidase M16 family. As to quaternary structure, monomer. Zn(2+) is required as a cofactor.

The protein resides in the periplasm. The enzyme catalyses Preferential cleavage of 16-Tyr-|-Leu-17 and 25-Phe-|-Tyr-26 bonds of oxidized insulin B chain. Also acts on other substrates of Mw less than 7 kDa such as insulin and glucagon.. In terms of biological role, endopeptidase that degrades small peptides of less than 7 kDa, such as glucagon and insulin. The polypeptide is Protease 3 (ptrA) (Salmonella typhi).